The sequence spans 351 residues: Anthranilate phosphoribosyltransferase (351 aa).

Residues G80, 83-84 (GD), T88, 90-93 (NIST), 108-116 (KHGNRSVTS), and S120 each bind 5-phospho-alpha-D-ribose 1-diphosphate. G80 is a binding site for anthranilate. A Mg(2+)-binding site is contributed by S92. Position 111 (N111) interacts with anthranilate. An anthranilate-binding site is contributed by R166. Mg(2+) contacts are provided by D229 and E230.

The protein belongs to the anthranilate phosphoribosyltransferase family. In terms of assembly, homodimer. Mg(2+) is required as a cofactor.

It catalyses the reaction N-(5-phospho-beta-D-ribosyl)anthranilate + diphosphate = 5-phospho-alpha-D-ribose 1-diphosphate + anthranilate. The protein operates within amino-acid biosynthesis; L-tryptophan biosynthesis; L-tryptophan from chorismate: step 2/5. Functionally, catalyzes the transfer of the phosphoribosyl group of 5-phosphorylribose-1-pyrophosphate (PRPP) to anthranilate to yield N-(5'-phosphoribosyl)-anthranilate (PRA). This Chlorobium limicola (strain DSM 245 / NBRC 103803 / 6330) protein is Anthranilate phosphoribosyltransferase.